Consider the following 507-residue polypeptide: Methionine--tRNA ligase (507 aa).

The 'HIGH' region motif lies at 12–22 (YYVNDVSHIGH). Residues 295–299 (KISKS) carry the 'KMSKS' region motif. Position 298 (lysine 298) interacts with ATP.

Belongs to the class-I aminoacyl-tRNA synthetase family. MetG type 2B subfamily. Monomer.

Its subcellular location is the cytoplasm. The catalysed reaction is tRNA(Met) + L-methionine + ATP = L-methionyl-tRNA(Met) + AMP + diphosphate. Is required not only for elongation of protein synthesis but also for the initiation of all mRNA translation through initiator tRNA(fMet) aminoacylation. In Rickettsia typhi (strain ATCC VR-144 / Wilmington), this protein is Methionine--tRNA ligase.